The sequence spans 263 residues: Oxidoreductase UcpA (263 aa).

10–32 (LITGALQGIGEGIARTFARHGAN) is a binding site for NAD(+). Position 141 (serine 141) interacts with substrate. The active-site Proton acceptor is the tyrosine 155.

Belongs to the short-chain dehydrogenases/reductases (SDR) family.

The protein is Oxidoreductase UcpA (ucpA) of Escherichia coli O157:H7.